The chain runs to 783 residues: Mitochondrial intermediate peptidase (783 aa).

The N-terminal 33 residues, 1 to 33 (MKAGIPLSRCTQRIPLLVARQVSRNITTTTTKF), are a transit peptide targeting the mitochondrion. Residue His565 participates in Zn(2+) binding. Residue Glu566 is part of the active site. His569 and His572 together coordinate Zn(2+).

Belongs to the peptidase M3 family. Zn(2+) is required as a cofactor.

Its subcellular location is the mitochondrion matrix. It carries out the reaction Release of an N-terminal octapeptide as second stage of processing of some proteins imported into the mitochondrion.. Its function is as follows. Cleaves proteins, imported into the mitochondrion, to their mature size. While most mitochondrial precursor proteins are processed to the mature form in one step by mitochondrial processing peptidase (MPP), the sequential cleavage by MIP of an octapeptide after initial processing by MPP is a required step for a subgroup of nuclear-encoded precursor proteins destined for the matrix or the inner membrane. The protein is Mitochondrial intermediate peptidase (OCT1) of Candida albicans (strain SC5314 / ATCC MYA-2876) (Yeast).